Consider the following 226-residue polypeptide: Protein Thf1 (226 aa).

The stretch at Glu-183–Ala-213 forms a coiled coil.

Belongs to the THF1 family.

May be involved in photosynthetic membrane biogenesis. The chain is Protein Thf1 from Gloeothece citriformis (strain PCC 7424) (Cyanothece sp. (strain PCC 7424)).